The sequence spans 253 residues: 5-oxoprolinase subunit A (253 aa).

It belongs to the LamB/PxpA family. As to quaternary structure, forms a complex composed of PxpA, PxpB and PxpC.

The enzyme catalyses 5-oxo-L-proline + ATP + 2 H2O = L-glutamate + ADP + phosphate + H(+). Its function is as follows. Catalyzes the cleavage of 5-oxoproline to form L-glutamate coupled to the hydrolysis of ATP to ADP and inorganic phosphate. This chain is 5-oxoprolinase subunit A, found in Bacillus cereus (strain B4264).